We begin with the raw amino-acid sequence, 1182 residues long: Phosphatidylinositol 3-kinase age-1 (1182 aa).

The span at 1-16 (MSMGRSPSTTFRSRTG) shows a compositional bias: polar residues. The interval 1–24 (MSMGRSPSTTFRSRTGSHGARDLI) is disordered. The 101-residue stretch at 74–174 (NEGVADIITM…FPMLFLYQPD (101 aa)) folds into the PI3K-ABD domain. A PI3K-RBD domain is found at 266–358 (KRKAEINGVC…YRCPGFVVRR (93 aa)). The C2 PI3K-type domain occupies 425 to 577 (LDANLMIRPV…SSYGGRVRMP (153 aa)). Residues 601–788 (DDYESCIRDP…SLLMEAYLRG (188 aa)) form the PIK helical domain. Residues 853 to 1168 (IIDKAIVLGS…IYEEAFNGSW (316 aa)) enclose the PI3K/PI4K catalytic domain. The segment at 859–865 (VLGSAKR) is G-loop. A catalytic loop region spans residues 1028–1036 (GIKDRHSDN). Positions 1047-1073 (HIDFGHILGHGKTKLGIQRDRQPFILT) are activation loop.

It belongs to the PI3/PI4-kinase family.

The catalysed reaction is a 1,2-diacyl-sn-glycero-3-phospho-(1D-myo-inositol) + ATP = a 1,2-diacyl-sn-glycero-3-phospho-(1D-myo-inositol-3-phosphate) + ADP + H(+). Functionally, phosphatidylinositol 3-kinase homolog that regulates longevity and diapause. Promotes cell survival during embryonic development by recruiting akt-1/2 to the plasma membrane through the production of PtdIns(3,4,5)P3. Could function in the development or neuroendocrine signaling of the dauer pathway. Mediates susceptibility to enteropathogenic E.coli infection. May negatively regulate AYI interneuron neurite outgrowth. Plays a role in aversive olfactory learning when an odor is associated with food deprivation. Regulates this process by promoting the nuclear relocalization of egl-4 in AWC olfactory neurons after odor conditioning. The chain is Phosphatidylinositol 3-kinase age-1 from Caenorhabditis elegans.